Reading from the N-terminus, the 544-residue chain is Chaperonin GroEL 3 (544 aa).

Residues 30 to 33 (TLGP), Lys51, 87 to 91 (DGTTT), Gly415, and Asp495 each bind ATP.

Belongs to the chaperonin (HSP60) family. As to quaternary structure, forms a cylinder of 14 subunits composed of two heptameric rings stacked back-to-back. Interacts with the co-chaperonin GroES.

Its subcellular location is the cytoplasm. The catalysed reaction is ATP + H2O + a folded polypeptide = ADP + phosphate + an unfolded polypeptide.. Its function is as follows. Together with its co-chaperonin GroES, plays an essential role in assisting protein folding. The GroEL-GroES system forms a nano-cage that allows encapsulation of the non-native substrate proteins and provides a physical environment optimized to promote and accelerate protein folding. The sequence is that of Chaperonin GroEL 3 from Psychromonas ingrahamii (strain DSM 17664 / CCUG 51855 / 37).